The following is a 331-amino-acid chain: NADH-quinone oxidoreductase subunit H (331 aa).

The next 9 helical transmembrane spans lie at 6 to 26, 45 to 65, 78 to 98, 120 to 140, 167 to 187, 193 to 213, 241 to 261, 263 to 283, and 311 to 331; these read FFIVETIIKAVVILSVIATLA, GPWMVGPAGVLQIVADMIKLF, FIFLIAPIISASCAFVAMSVI, IGILFLLSVSGTCVYGTLIGG, GLSLIPVIMMVGSLSLIDIVH, ITSWFLIKQPVCFVLFTIAAF, MRWGMFFIGEYANMITYSIVI, LIFLGGFNSFWFIPGSLMIFL, and CWKICMPIALICIFVTAFVII.

Belongs to the complex I subunit 1 family. In terms of assembly, NDH-1 is composed of 14 different subunits. Subunits NuoA, H, J, K, L, M, N constitute the membrane sector of the complex.

It localises to the cell inner membrane. The enzyme catalyses a quinone + NADH + 5 H(+)(in) = a quinol + NAD(+) + 4 H(+)(out). In terms of biological role, NDH-1 shuttles electrons from NADH, via FMN and iron-sulfur (Fe-S) centers, to quinones in the respiratory chain. The immediate electron acceptor for the enzyme in this species is believed to be ubiquinone. Couples the redox reaction to proton translocation (for every two electrons transferred, four hydrogen ions are translocated across the cytoplasmic membrane), and thus conserves the redox energy in a proton gradient. This subunit may bind ubiquinone. The sequence is that of NADH-quinone oxidoreductase subunit H from Campylobacter hominis (strain ATCC BAA-381 / DSM 21671 / CCUG 45161 / LMG 19568 / NCTC 13146 / CH001A).